A 74-amino-acid chain; its full sequence is Conotoxin ca17a (74 aa).

Positions 1-20 (MQKATVLLLALLLLLPLSTA) are cleaved as a signal peptide. Residues 21 to 40 (QDAEGSQEDAAQREVDIATR) constitute a propeptide that is removed on maturation. 4-hydroxyproline is present on Pro-51.

Post-translationally, contains disulfide bonds. As to expression, expressed by the venom gland.

The protein resides in the secreted. The polypeptide is Conotoxin ca17a (Conus caracteristicus (Characteristic cone)).